Consider the following 516-residue polypeptide: Putative F-box and FNIP repeat-containing protein L414 (516 aa).

The F-box domain occupies 4–49; the sequence is INDLNMDVILHLLTFLTDKNKLNFMMTCTHLYQFISCVKYNNFQLF. FNIP repeat units lie at residues 123–165, 166–208, 341–383, 385–428, and 429–470; these read FNHT…FGEN, FNKM…LMYS, YNPK…NFNG, YDNI…FGKL, and YNKP…FGYM.

The protein is Putative F-box and FNIP repeat-containing protein L414 of Acanthamoeba polyphaga (Amoeba).